Reading from the N-terminus, the 1407-residue chain is DNA-directed RNA polymerase subunit beta' (1407 aa).

Zn(2+) contacts are provided by Cys70, Cys72, Cys85, and Cys88. Positions 460, 462, and 464 each coordinate Mg(2+). Residues Cys814, Cys888, Cys895, and Cys898 each contribute to the Zn(2+) site. Lys972 is modified (N6-acetyllysine).

The protein belongs to the RNA polymerase beta' chain family. In terms of assembly, the RNAP catalytic core consists of 2 alpha, 1 beta, 1 beta' and 1 omega subunit. When a sigma factor is associated with the core the holoenzyme is formed, which can initiate transcription. Requires Mg(2+) as cofactor. Zn(2+) serves as cofactor.

It carries out the reaction RNA(n) + a ribonucleoside 5'-triphosphate = RNA(n+1) + diphosphate. DNA-dependent RNA polymerase catalyzes the transcription of DNA into RNA using the four ribonucleoside triphosphates as substrates. This is DNA-directed RNA polymerase subunit beta' from Escherichia coli O1:K1 / APEC.